Reading from the N-terminus, the 225-residue chain is Thymidylate kinase (225 aa).

Position 10-17 (10-17 (GGEGAGKT)) interacts with ATP.

The protein belongs to the thymidylate kinase family.

The enzyme catalyses dTMP + ATP = dTDP + ADP. Phosphorylation of dTMP to form dTDP in both de novo and salvage pathways of dTTP synthesis. The protein is Thymidylate kinase of Oceanobacillus iheyensis (strain DSM 14371 / CIP 107618 / JCM 11309 / KCTC 3954 / HTE831).